Reading from the N-terminus, the 150-residue chain is UPF0208 membrane protein VP2081 (150 aa).

2 helical membrane-spanning segments follow: residues 42-62 (FGIK…MAFN) and 70-90 (SIVV…WLGA).

The protein belongs to the UPF0208 family.

It localises to the cell inner membrane. The chain is UPF0208 membrane protein VP2081 from Vibrio parahaemolyticus serotype O3:K6 (strain RIMD 2210633).